The following is a 282-amino-acid chain: ATP synthase gamma chain (282 aa).

This sequence belongs to the ATPase gamma chain family. F-type ATPases have 2 components, CF(1) - the catalytic core - and CF(0) - the membrane proton channel. CF(1) has five subunits: alpha(3), beta(3), gamma(1), delta(1), epsilon(1). CF(0) has three main subunits: a, b and c.

Its subcellular location is the cell inner membrane. Produces ATP from ADP in the presence of a proton gradient across the membrane. The gamma chain is believed to be important in regulating ATPase activity and the flow of protons through the CF(0) complex. This chain is ATP synthase gamma chain, found in Fusobacterium nucleatum subsp. nucleatum (strain ATCC 25586 / DSM 15643 / BCRC 10681 / CIP 101130 / JCM 8532 / KCTC 2640 / LMG 13131 / VPI 4355).